Here is a 54-residue protein sequence, read N- to C-terminus: Califin-C (54 aa).

The cysteines at positions 25 and 53 are disulfide-linked. Leu-36 bears the Leucine amide mark.

This sequence belongs to the molluscan ELH family. This protein consists of a large 36-residue subunit, bound by a single disulfide-bond to a small 18-residue subunit.

The protein localises to the secreted. Functionally, injected in sexually mature animals califin C excites LB and LC cells of the abdominal ganglion and cause egg-laying. In Aplysia californica (California sea hare), this protein is Califin-C.